A 457-amino-acid polypeptide reads, in one-letter code: C4-dicarboxylate transport protein (457 aa).

Helical transmembrane passes span 20–42 (LYFQ…PAFA), 51–73 (AFIK…TGIA), 88–110 (AMAY…AHVV), 138–158 (LTLV…AFTG), 166–188 (LTGP…LALV), 212–234 (ILMR…KYGV), and 241–263 (AWLV…GLVS).

Belongs to the dicarboxylate/amino acid:cation symporter (DAACS) (TC 2.A.23) family.

The protein localises to the cell inner membrane. In terms of biological role, responsible for the transport of dicarboxylates such as succinate, fumarate, and malate from the periplasm across the membrane. This chain is C4-dicarboxylate transport protein, found in Xanthomonas axonopodis pv. citri (strain 306).